The primary structure comprises 83 residues: Scyreptin (83 aa).

Its function is as follows. cationic antimicrobial peptide that exhibits a potent and broad-spectrum antimicrobial activity against both bacteria and fungi, as well as against the multidrug-resistant bacteria P.aeruginosa. Exhibits rapid bactericidal kinetic. Acts by destroying the integrity of bacterial membranes, leading to bacterial death. Also exhibits potent anti-biofilm activity against P.aeruginosa. Shows high thermal stability and ion tolerance, as it maintains antibacterial activity even when heated to 100 degrees Celsius for 30 minutes and in presence of high levels of NaCl, CaCl(2) and MgCl(2). Does not show cytotoxicity and hemolytic activity. In a mouse model of burn infection, exhibits a remarkably reduction in the bacterial load caused by multidrug-resistant P.aeruginosa at the site of infection, and promotes wound healing. The chain is Scyreptin from Scylla paramamosain (Mud crab).